A 292-amino-acid chain; its full sequence is Rab effector Noc2 (292 aa).

Positions 41–158 (QRKSQSLSPA…KRSGAWFYKG (118 aa)) constitute a RabBD domain. The segment at 89 to 146 (GNGLSQCLLCGEVLGFLGSSSVFCKDCRKKVCTKCGIEASPSQKRPLWLCKICSEQRE) adopts an FYVE-type zinc-finger fold. The Zn(2+) site is built by cysteine 95, cysteine 98, cysteine 112, cysteine 115, cysteine 120, cysteine 123, cysteine 138, and cysteine 141. The tract at residues 175–292 (PSFRPLPVEP…RTLAGPRGPR (118 aa)) is disordered. The span at 221–235 (LDDRLRPAGVRDPKG) shows a compositional bias: basic and acidic residues. Phosphoserine is present on serine 248. Low complexity predominate over residues 257 to 269 (ASCLSGSQSSLAS).

In terms of assembly, recruited to dense-core vesicles through specific interaction with RAB27A in endocrine cells. Interacts with RAB3A, RAB3B, RAB3C and RAB3D. Interacts with ZYX.

The protein resides in the cytoplasm. It is found in the cytoplasmic vesicle. The protein localises to the secretory vesicle membrane. Functionally, rab GTPase effector involved in the late steps of regulated exocytosis, both in endocrine and exocrine cells. This is Rab effector Noc2 (RPH3AL) from Bos taurus (Bovine).